We begin with the raw amino-acid sequence, 345 residues long: N-glycosylase/DNA lyase (345 aa).

The DNA site is built by N149, R154, and R204. K249 acts as the Schiff-base intermediate with DNA in catalysis. 8-oxoguanine contacts are provided by P266 and D268. H270 and Q287 together coordinate DNA. 2 residues coordinate 8-oxoguanine: Q315 and F319. Over residues 324–334 (RQSRHAQEPPA) the composition is skewed to basic and acidic residues. A disordered region spans residues 324–345 (RQSRHAQEPPAKRRKGSKGPEG). Residues 335 to 345 (KRRKGSKGPEG) are compositionally biased toward basic residues.

Belongs to the type-1 OGG1 family. As to expression, ubiquitous.

The protein resides in the nucleus. The protein localises to the nucleoplasm. Its subcellular location is the nucleus speckle. It localises to the nucleus matrix. It is found in the mitochondrion. It carries out the reaction 2'-deoxyribonucleotide-(2'-deoxyribose 5'-phosphate)-2'-deoxyribonucleotide-DNA = a 3'-end 2'-deoxyribonucleotide-(2,3-dehydro-2,3-deoxyribose 5'-phosphate)-DNA + a 5'-end 5'-phospho-2'-deoxyribonucleoside-DNA + H(+). Its function is as follows. DNA repair enzyme that incises DNA at 8-oxoG residues. Excises 7,8-dihydro-8-oxoguanine and 2,6-diamino-4-hydroxy-5-N-methylformamidopyrimidine (FAPY) from damaged DNA. Has a beta-lyase activity that nicks DNA 3' to the lesion. This Homo sapiens (Human) protein is N-glycosylase/DNA lyase (OGG1).